We begin with the raw amino-acid sequence, 198 residues long: Probable GTP-binding protein EngB (198 aa).

The EngB-type G domain maps to 36 to 198 (SDPQFAFIGR…NLSKLQELLE (163 aa)). GTP-binding positions include 44 to 51 (GRSNVGKS), 70 to 74 (GRTQL), 88 to 91 (DLPG), 155 to 158 (NKID), and 182 to 184 (ISA). Mg(2+) is bound by residues S51 and T72.

This sequence belongs to the TRAFAC class TrmE-Era-EngA-EngB-Septin-like GTPase superfamily. EngB GTPase family. It depends on Mg(2+) as a cofactor.

Functionally, necessary for normal cell division and for the maintenance of normal septation. The protein is Probable GTP-binding protein EngB of Mesomycoplasma hyopneumoniae (strain 7448) (Mycoplasma hyopneumoniae).